The primary structure comprises 68 residues: Guanine nucleotide-binding protein G(I)/G(S)/G(O) subunit gamma-5B (68 aa).

The region spanning 3 to 68 (GFSSVAATKK…FRPQKVCSFL (66 aa)) is the G protein gamma domain. The residue at position 65 (Cys65) is a Cysteine methyl ester. Cys65 carries S-geranylgeranyl cysteine lipidation. The propeptide at 66–68 (SFL) is removed in mature form.

This sequence belongs to the G protein gamma family. In terms of assembly, g proteins are composed of 3 units; alpha, beta and gamma.

The protein localises to the cell membrane. Its function is as follows. Guanine nucleotide-binding proteins (G proteins) are involved as a modulator or transducer in various transmembrane signaling systems. The beta and gamma chains are required for the GTPase activity, for replacement of GDP by GTP, and for G protein-effector interaction. The polypeptide is Guanine nucleotide-binding protein G(I)/G(S)/G(O) subunit gamma-5B (Homo sapiens (Human)).